The chain runs to 419 residues: UPF0242 protein TC_0906 (419 aa).

The protein belongs to the UPF0242 family.

This Chlamydia muridarum (strain MoPn / Nigg) protein is UPF0242 protein TC_0906.